Consider the following 420-residue polypeptide: MTKWKRANPNGTRDYLFEECTLIEEVEQKLRRTFLERGYEEIRTPTIEFYDVFAFQSRPIDEEKMYKFFDEKGRIIVLRPDMTIPLARVMGTQRCDTPLKVTYSGNVFRANESLAGKYNEIVQSGIEVIGIDNVRAEIECVISVIQSLQKLKVQSFTIEIGQVQLYKCIVKKLSIHEEEEKVLRTYIESKNYAALSNFIRDKKLDRCDETVKLLEKLPRLFGNLEVIEEAEKLASSNEMKMAITRVKEIYEAIEKLGYGSYISIDLGMIQHLDYYTGVIFKGYIYEIGEEIVSGGRYDELIGNFGEMLPAVGLAVQVNQIVKALQEQQEPYERKRIDIMIHYELNRLAEAERLRNLLQKDGKKVALSLFSNLNDTFQFARKNQIVTVVEAKSESLVEYVWKEKWVVQKEGETSCVTFKLR.

Belongs to the class-II aminoacyl-tRNA synthetase family. HisZ subfamily. Heteromultimer composed of HisG and HisZ subunits.

Its subcellular location is the cytoplasm. Its pathway is amino-acid biosynthesis; L-histidine biosynthesis; L-histidine from 5-phospho-alpha-D-ribose 1-diphosphate: step 1/9. Functionally, required for the first step of histidine biosynthesis. May allow the feedback regulation of ATP phosphoribosyltransferase activity by histidine. The sequence is that of ATP phosphoribosyltransferase regulatory subunit from Bacillus cereus (strain ZK / E33L).